We begin with the raw amino-acid sequence, 196 residues long: MKVILLERLEGWGGLGDVVDVKDGYARNFLLPRQKALRANGANLKVFEAQRAEIEARNAKAKEAAGKAGEKLDGTQYVLIRQAGESGQLYGSVSGRDVADAVNAEGGKVERSMVVLDKPIKTLGMHEVKIRLHSEVAVTVTLNIARSQDEADRQARGENVIASQFEDERMAAEQAAADLLEGGAGQQASEYTEAQA.

The interval 174–196 (QAAADLLEGGAGQQASEYTEAQA) is disordered. The segment covering 186–196 (QQASEYTEAQA) has biased composition (polar residues).

It belongs to the bacterial ribosomal protein bL9 family.

Binds to the 23S rRNA. The sequence is that of Large ribosomal subunit protein bL9 from Phenylobacterium zucineum (strain HLK1).